The sequence spans 2381 residues: Protein Ycf2 (2381 aa).

1655–1662 (GPMETGRS) provides a ligand contact to ATP.

It belongs to the Ycf2 family.

The protein resides in the plastid. Its subcellular location is the chloroplast stroma. In terms of biological role, probable ATPase of unknown function. Its presence in a non-photosynthetic plant (Epifagus virginiana) and experiments in tobacco indicate that it has an essential function which is probably not related to photosynthesis. In Angiopteris evecta (Mule's foot fern), this protein is Protein Ycf2.